Consider the following 1549-residue polypeptide: VPS10 homolog 1 (1549 aa).

Residues 1–21 form the signal peptide; that stretch reads MALFRALYIIWVFLLIPLSNA. Topologically, residues 22–1369 are lumenal; the sequence is EEFTPKVTRT…AFREKYSINT (1348 aa). 6 BNR repeats span residues 57–68, 101–112, 159–170, 228–239, 393–404, and 465–476; these read EISFDAGENWKT, YVTDDQGKSWRP, IYTTNDGVSFSQ, ILSADGGETFKE, KVSVDNGLTWTN, and FISRDSGLTWRL. Asparagine 479 carries an N-linked (GlcNAc...) asparagine glycan. BNR repeat units lie at residues 511–522 and 740–751; these read YYSLDQGKTWGE and YISHDGGQTIKR. Asparagine 769 is a glycosylation site (N-linked (GlcNAc...) asparagine). The BNR 9 repeat unit spans residues 837–848; that stretch reads YLTKDGGETFTE. Asparagine 986 carries an N-linked (GlcNAc...) asparagine glycan. BNR repeat units lie at residues 1040–1051, 1119–1130, and 1160–1171; these read KITFNDGSDWNF, FLTTDGGETWTE, and SYSTDFGKTWKD. Residues 1370 to 1390 traverse the membrane as a helical segment; it reads GAYALVFVTILLVIFFVAWFV. The Cytoplasmic segment spans residues 1391–1549; it reads YDRGIRRNGG…DLAAARSEDK (159 aa). Positions 1479 to 1549 are disordered; the sequence is EPDGFHEDSN…DLAAARSEDK (71 aa). A compositionally biased stretch (polar residues) spans 1489 to 1501; the sequence is DLSSFRGQGSNSE. Residues 1535 to 1549 are compositionally biased toward basic and acidic residues; the sequence is ASHESDLAAARSEDK.

It belongs to the VPS10-related sortilin family.

It is found in the golgi apparatus. The protein localises to the trans-Golgi network membrane. Its subcellular location is the endosome membrane. Its function is as follows. Functions as a sorting receptor in the Golgi compartment required for the intracellular sorting and delivery of soluble vacuolar proteins, like carboxypeptidase Y (CPY) and proteinase A. The polypeptide is VPS10 homolog 1 (VTH1) (Saccharomyces cerevisiae (strain ATCC 204508 / S288c) (Baker's yeast)).